Here is a 236-residue protein sequence, read N- to C-terminus: Purine nucleoside phosphorylase DeoD-type 1 (236 aa).

Position 5 (histidine 5) interacts with a purine D-ribonucleoside. Residues glycine 21, arginine 25, arginine 44, and 88 to 91 (RVGS) contribute to the phosphate site. Residues 180 to 182 (EME) and 204 to 205 (TD) each bind a purine D-ribonucleoside. Aspartate 205 acts as the Proton donor in catalysis.

It belongs to the PNP/UDP phosphorylase family. As to quaternary structure, homohexamer; trimer of homodimers.

It carries out the reaction a purine D-ribonucleoside + phosphate = a purine nucleobase + alpha-D-ribose 1-phosphate. The enzyme catalyses a purine 2'-deoxy-D-ribonucleoside + phosphate = a purine nucleobase + 2-deoxy-alpha-D-ribose 1-phosphate. Functionally, catalyzes the reversible phosphorolytic breakdown of the N-glycosidic bond in the beta-(deoxy)ribonucleoside molecules, with the formation of the corresponding free purine bases and pentose-1-phosphate. The chain is Purine nucleoside phosphorylase DeoD-type 1 from Shewanella oneidensis (strain ATCC 700550 / JCM 31522 / CIP 106686 / LMG 19005 / NCIMB 14063 / MR-1).